A 335-amino-acid polypeptide reads, in one-letter code: Trans-3-hydroxy-L-proline dehydratase (335 aa).

Cys91 acts as the Proton acceptor in catalysis. Substrate-binding positions include 92-93 (GH), His222, and 256-257 (GS).

Belongs to the proline racemase family. In terms of assembly, homodimer.

It carries out the reaction trans-3-hydroxy-L-proline = 1-pyrroline-2-carboxylate + H2O. Catalyzes the dehydration of trans-3-hydroxy-L-proline (t3LHyp) to Delta(1)-pyrroline-2-carboxylate (Pyr2C). Does not possess neither proline racemase nor 4-hydroxyproline 2-epimerase activities. In Burkholderia cenocepacia (strain HI2424), this protein is Trans-3-hydroxy-L-proline dehydratase.